The following is a 501-amino-acid chain: MFTLPQKDFRAPTTCLGPTCMQDLGSSHGEDLEGECSRKLDQKLPELRGVGDPAMISSDTSYLSSRGRMIKWFWDSAEEGYRTYHMDEYDEDKNPSGIINLGTSENKLCFDLLSWRLSQRDMQRVEPSLLQYADWRGHLFLREEVAKFLSFYCKSPVPLRPENVVVLNGGASLFSALATVLCEAGEAFLIPTPYYGAITQHVCLYGNIRLAYVYLDSEVTGLDTRPFQLTVEKLEMALREAHSEGVKVKGLILISPQNPLGDVYSPEELQEYLVFAKRHRLHVIVDEVYMLSVFEKSVGYRSVLSLERLPDPQRTHVMWATSKDFGMSGLRFGTLYTENQDVATAVASLCRYHGLSGLVQYQMAQLLRDRDWINQVYLPENHARLKAAHTYVSEELRALGIPFLSRGAGFFIWVDLRKYLPKGTFEEEMLLWRRFLDNKVLLSFGKAFECKEPGWFRFVFSDQVHRLCLGMQRVQQVLAGKSQVAEDPRPSQSQEPSDQRR.

Glutamate 105 lines the substrate pocket. Position 323 is an N6-(pyridoxal phosphate)lysine (lysine 323). A disordered region spans residues 480–501 (GKSQVAEDPRPSQSQEPSDQRR). Polar residues predominate over residues 490–501 (PSQSQEPSDQRR).

Belongs to the class-I pyridoxal-phosphate-dependent aminotransferase family.

In terms of biological role, does not catalyze the synthesis of 1-aminocyclopropane-1-carboxylate but is capable of catalyzing the deamination of L-vinylglycine. This Homo sapiens (Human) protein is 1-aminocyclopropane-1-carboxylate synthase-like protein 1 (ACCS).